Here is a 101-residue protein sequence, read N- to C-terminus: Small ribosomal subunit protein uS14 (101 aa).

This sequence belongs to the universal ribosomal protein uS14 family. In terms of assembly, part of the 30S ribosomal subunit. Contacts proteins S3 and S10.

Functionally, binds 16S rRNA, required for the assembly of 30S particles and may also be responsible for determining the conformation of the 16S rRNA at the A site. The sequence is that of Small ribosomal subunit protein uS14 from Dinoroseobacter shibae (strain DSM 16493 / NCIMB 14021 / DFL 12).